The primary structure comprises 428 residues: MLLEQIWGFLTAHPISVVTTILIVYLIHITLKPLNRVRRLGDVGLFFGKPELKGFYRERQLERLKLLRRVGDMPPVFPNGWYCVCESEKLANNQIMEITVLGQFLSLIRSESGAVYITDSYCPHIGANFNIGGRVVRDNCIQCPFHGWIFSAETGKCVEVPYDEGRIPEQAKVTTWPCIERNNNIYLWYHCDGAEPEWEIPEITEITDGFWHLGGRTEHEVMCHIQEIPENGADIAHLNYLHKSAPPVTKGSDIIKTDLSDPQPAVQHVWDGKWEVKSEEDRHCGVMHLNQFMTFWGYKVPLTSSKLVAEQHGPGIVHMLFDFGIWGKGVVFQTVTPEEALLQRVRFRIFSNIPWFFVKFFMTVEAMQFERDVFIWSNKKYIKSPLLVKNDGPIQKHRRWFSQFYTENSPKMLKDGSLSNQAKSIFDW.

Residues 6–26 (IWGFLTAHPISVVTTILIVYL) traverse the membrane as a helical segment. In terms of domain architecture, Rieske spans 81–187 (WYCVCESEKL…CIERNNNIYL (107 aa)). Positions 122, 124, 143, and 146 each coordinate [2Fe-2S] cluster.

Belongs to the cholesterol 7-desaturase family. The cofactor is [2Fe-2S] cluster. In terms of tissue distribution, expressed in intestine at all postembryonic stages, including dauer. Expression is reduced in daf-2 mutants.

It localises to the membrane. It catalyses the reaction cholesterol + NADPH + O2 + H(+) = 7-dehydrocholesterol + NADP(+) + 2 H2O. It carries out the reaction cholesterol + NADH + O2 + H(+) = 7-dehydrocholesterol + NAD(+) + 2 H2O. It participates in steroid hormone biosynthesis; dafachronic acid biosynthesis. Catalyzes the production of 7-dehydrocholesterol (7-DHC or cholesta-5,7-dien-3beta-ol) by inserting a double bond (desaturating) at the C7-C8 single bond of cholesterol. This reaction is the first step in the synthesis of the steroid hormone Delta(7)-dafachronic acid (one of the principal steroid hormones in nematodes). Dafachronic acids bind directly to the nuclear hormone receptor (NHR) daf-12, suppressing dauer formation and inducing reproductive growth. The polypeptide is Cholesterol 7-desaturase (daf-36) (Caenorhabditis elegans).